A 363-amino-acid chain; its full sequence is Two-pore potassium channel 1 (363 aa).

The segment at 1–61 (MSSDAARTPL…DDVKIDEPPP (61 aa)) is disordered. At 1-78 (MSSDAARTPL…FSDLNPNLRR (78 aa)) the chain is on the cytoplasmic side. Residues 31-42 (SSRKRRLRRSRS) show a composition bias toward basic residues. The chain crosses the membrane as a helical span at residues 79-99 (VIMFLALYLTIGTLCFYLVRD). Residues 111–130 (DALYFCIVTMTTVGYGDLVP) constitute an intramembrane region (pore-forming). Residues 137–157 (LLACAFVFSGMVLVGHLLSRA) traverse the membrane as a helical segment. Topologically, residues 158–197 (ADYLVEKQEALLVRAFHLRQSFGPTDILKELHTNKLRYKC) are cytoplasmic. The helical transmembrane segment at 198 to 218 (YATCLVLVVLFIVGTIFLVMV) threads the bilayer. Residues 225 to 244 (SAFYCVCSTVTTLGYGDKSF) constitute an intramembrane region (pore-forming). Residues 251 to 271 (LFAVFWILTSSICLAQFFLYV) form a helical membrane-spanning segment. At 272–363 (AELNTENKQR…LAQTTSQIQR (92 aa)) the chain is on the cytoplasmic side. EF-hand domains are found at residues 288 to 323 (LTRR…EMGK) and 327 to 362 (KDIS…SQIQ). The Endoplasmic reticulum release signal motif lies at 296–298 (DLE). Residues Asp-301, Asp-303, Asp-305, Glu-312, Asp-340, Asp-342, Ser-344, Thr-346, and Asp-351 each coordinate Ca(2+).

This sequence belongs to the two pore domain potassium channel (TC 1.A.1.7) family. In terms of assembly, homodimer. Interacts with GRF1 and GRF6, but only GRF6 modulates the channel activity. Phosphorylation at Ser-42 increases and stabilizes the interaction with 14-3-3 proteins. Detected in mesophyll cells, guard cells and vascular tissues of the leaves. Expressed in the hilum, where the funiculus is attached during fruit maturation and in the embryo. Also expressed at a lower level in seedlings, root tips and elongation zones, and flowers. Could be detected in mitotically active tissues.

The protein localises to the vacuole membrane. Its activity is regulated as follows. Could be activated by protein kinase C. Strongly induced by calcium. Blocked by barium, tetraethylammonium (TEA), quinine and quinidine. In terms of biological role, voltage-independent, large conductance and potassium-selective tonoplast ion channel. Regulated by cytoplasmic calcium and pH. Does not mediate slow-vacuolar (SV) ionic currents, but essential to establish VK currents. Has some permeability for Rb(+) and NH(4)(+), but none for Na(+), Cs(+) or Li(+). Involved in intracellular K(+) redistribution and/or K(+) retranslocation between different tissues. This Arabidopsis thaliana (Mouse-ear cress) protein is Two-pore potassium channel 1 (TPK1).